We begin with the raw amino-acid sequence, 368 residues long: Nucleotide pyrophosphatase/phosphodiesterase (368 aa).

It belongs to the metallophosphoesterase superfamily. In terms of assembly, monomer and homomer. Post-translationally, glycosylated.

It localises to the plastid. The protein localises to the chloroplast. Its function is as follows. Hydrolyzes pyrophosphate, phosphodiester and phosphosulfate linkages of nucleotide-sugars, sulfonucleotides and nucleoside di and triphosphates. Highest activity observed with the substrates ADP-glucose and adenosine 5'-phosphosulfate. This Hordeum vulgare (Barley) protein is Nucleotide pyrophosphatase/phosphodiesterase.